The chain runs to 370 residues: Ubiquitin carboxyl-terminal hydrolase 12 (370 aa).

The Required for plasma membrane localization of USP12/WDR20 signature appears at 1–4; that stretch reads MEIL. Residues 39–369 enclose the USP domain; it reads FGLVNFGNTC…SGYILFYQSR (331 aa). Cys-48 acts as the Nucleophile in catalysis. Residues 146–157 show a composition bias toward basic and acidic residues; the sequence is QEKQNGRLRNGD. Positions 146–168 are disordered; the sequence is QEKQNGRLRNGDVDNEDNNSTPD. Positions 186, 189, 233, and 236 each coordinate Zn(2+). The active-site Proton acceptor is the His-317.

Belongs to the peptidase C19 family. USP12/USP46 subfamily. As to quaternary structure, interacts with WDR48. Interacts with WDR20; this interaction promotes translocation of the USP12 complex to the plasma membrane. Component of the USP12/WDR20/WDR48 deubiquitinating complex. Component of the USP12/DMWD/WDR48 deubiquitinating complex. Interacts with PHLPP1. Interacts with RBPJ. Interacts with CBP; this interaction blocks the acetyltransferase activity of CREBBP.

Its subcellular location is the nucleus. The protein resides in the cytoplasm. The protein localises to the cell membrane. It catalyses the reaction Thiol-dependent hydrolysis of ester, thioester, amide, peptide and isopeptide bonds formed by the C-terminal Gly of ubiquitin (a 76-residue protein attached to proteins as an intracellular targeting signal).. With respect to regulation, activated by interaction with WDR20; WDR48 and DMWD through different allosteric mechanisms. In terms of biological role, deubiquitinating enzyme that plays various roles in the regulation of the immune response and inflammation. During TCR engagement and activation, translocates into the cytoplasm and deubiquitinates its substrates LAT and TRAT1 and prevents their lysosome-dependent degradation to stabilize the TCR signaling complex at the plasma membrane. Plays an essential role in the selective LPS-induced macrophage response through the activation of NF-kappa-B pathway. In addition, promotes that antiviral immune response through targeting DNA sensor IFI16 to inhibit its proteasome-dependent degradation. Participates in the interferon signaling pathway and antiviral response independently of its deubiquitinase activity by maintaining nuclear phosphorylated STAT1 levels via inhibition of its CREBBP-mediated acetylation and subsequent dephosphorylation. Plays an intrinsic role in promoting the differentiation, activation and proliferation of CD4(+) T-cell by activating the NF-kappa-B signaling pathway through deubiquitinating and stabilizing B-cell lymphoma/leukemia 10/BCL10. In myeloid-derived suppressor cells promotes the activation of the NF-kappa-B via deubiquitination and stabilization of RELA. Regulates the 'Lys-63'-linked polyubiquitin chains of BAX and thereby modulates the mitochondrial apoptotic process. Negative regulator of NOTCH signaling that specifically deubiquitinates non-activated NOTCH receptors to target them for lysosomal degradation; deubiquitination of NOTCH stimulates its transport form late endosomes to lysosomes. Protects neurons against HTT/huntingtin-induced polyglutamine expansion-dependent neurodegeneration through regulation of autophagic flux. This function is independent of deubiquitinase activity or of other components of the USP12-WDR20-WDR48 deubiquitinating complex. In complex with WDR48, acts as a potential tumor suppressor by positively regulating PHLPP1 stability. This chain is Ubiquitin carboxyl-terminal hydrolase 12 (Usp12), found in Mus musculus (Mouse).